Reading from the N-terminus, the 281-residue chain is Probable catechol O-methyltransferase 2 (281 aa).

Isoleucine 78, glutamate 100, serine 108, glutamate 127, valine 128, alanine 156, and aspartate 183 together coordinate S-adenosyl-L-methionine. Aspartate 183 is a Mg(2+) binding site. Lysine 186 lines the substrate pocket. Aspartate 211 and asparagine 212 together coordinate Mg(2+). Asparagine 212 serves as a coordination point for substrate.

The protein belongs to the class I-like SAM-binding methyltransferase superfamily. Cation-dependent O-methyltransferase family. Mg(2+) is required as a cofactor.

The protein localises to the vacuole. It carries out the reaction a catechol + S-adenosyl-L-methionine = a guaiacol + S-adenosyl-L-homocysteine + H(+). This Schizosaccharomyces pombe (strain 972 / ATCC 24843) (Fission yeast) protein is Probable catechol O-methyltransferase 2.